Reading from the N-terminus, the 1423-residue chain is Guanine nucleotide exchange factor subunit RIC1 (1423 aa).

WD repeat units follow at residues 64-103 and 304-343; these read TQFG…GDKY and NKTG…LICT. Residues 437 to 448 show a composition bias toward polar residues; it reads ASQTQNPRSSST. The interval 437–463 is disordered; it reads ASQTQNPRSSSTHSEHKPSREKSPFAD. The span at 449-460 shows a compositional bias: basic and acidic residues; that stretch reads HSEHKPSREKSP. Phosphothreonine occurs at positions 992 and 996. Serine 1015, serine 1017, serine 1019, serine 1037, and serine 1172 each carry phosphoserine. Positions 1355 to 1423 are disordered; sequence PDAFQPITMG…QDGTYDCSVS (69 aa). Over residues 1379 to 1397 the composition is skewed to polar residues; it reads GSSSHGSIPQGEVGSSNMV. Residues 1404–1413 are compositionally biased toward acidic residues; sequence TAQAEEEEPF.

The protein belongs to the RIC1 family. Forms a complex with RGP1; the interaction enhances RAB6A GTPase activity. Interacts (via central domain) with RGP1. Interacts with RAB6A; the interaction is direct with a preference for RAB6A-GDP. Interacts (via C-terminus domain) with RAB33B; the interaction is direct with a preference for RAB33B-GTP. Interacts with GJA1. In terms of tissue distribution, present in kidney and various cell lines (at protein level). Widely expressed at low level.

Its subcellular location is the cytoplasm. The protein resides in the cytosol. It is found in the membrane. Its function is as follows. The RIC1-RGP1 complex acts as a guanine nucleotide exchange factor (GEF), which activates RAB6A by exchanging bound GDP for free GTP, and may thereby be required for efficient fusion of endosome-derived vesicles with the Golgi compartment. The RIC1-RGP1 complex participates in the recycling of mannose-6-phosphate receptors. Required for phosphorylation and localization of GJA1. Is a regulator of procollagen transport and secretion, and is required for correct cartilage morphogenesis and development of the craniofacial skeleton. The polypeptide is Guanine nucleotide exchange factor subunit RIC1 (Homo sapiens (Human)).